The following is a 352-amino-acid chain: Uroporphyrinogen decarboxylase (352 aa).

Residues 26 to 30, Asp-76, Tyr-153, Ser-208, and His-323 each bind substrate; that span reads RQAGR.

Belongs to the uroporphyrinogen decarboxylase family. Homodimer.

It is found in the cytoplasm. It carries out the reaction uroporphyrinogen III + 4 H(+) = coproporphyrinogen III + 4 CO2. The protein operates within porphyrin-containing compound metabolism; protoporphyrin-IX biosynthesis; coproporphyrinogen-III from 5-aminolevulinate: step 4/4. Its function is as follows. Catalyzes the decarboxylation of four acetate groups of uroporphyrinogen-III to yield coproporphyrinogen-III. This is Uroporphyrinogen decarboxylase from Prochlorococcus marinus (strain MIT 9303).